The following is a 1087-amino-acid chain: A-kinase anchor protein 9 (1087 aa).

A coiled-coil region spans residues 5-461; sequence EVQCQAEKVR…REREKMERIQ (457 aa). Positions 559 to 572 are PKA-RII subunit binding domain; sequence SLQKVLEEKVAAAL. Residues 614-773 are a coiled coil; it reads MESDVSALTW…SEKEDKTEVQ (160 aa). The span at 667-685 shows a compositional bias: basic and acidic residues; sequence VQDSETKQRERERQSRLHG. Positions 667–691 are disordered; it reads VQDSETKQRERERQSRLHGDLGVLE.

In terms of assembly, interacts with the regulatory region of protein kinase N (PKN), protein phosphatase 2A (PP2A), protein phosphatase 1 (PP1) and the immature non-phosphorylated form of PKC epsilon. Interacts with CIP4 and FNBP1. Interacts with chloride intracellular channel proteins CLIC1, CLIC4 and CLIC5. CSNK1D binding promotes its centrosomal subcellular location. Interacts with GM130/GOLGA2; leading to recruitment to the Golgi apparatus. Interacts with KCNQ1; targets protein kinase A (PKA) catalytic and regulatory subunits and protein phosphatase 1 (PP1), to the heterodimer KCNQ1-KCNE1. Interacts with PDE4DIP; this interaction stabilizes both proteins. In complex with PDE4DIP, recruits CAMSAP2 to the Golgi apparatus. Forms a pericentrosomal complex with CDK5RAP2, EB1/MAPRE1 and PDE4DIP; within this complex, MAPRE1 binding to CDK5RAP2 may be mediated by PDE4DIP. The interaction with PDE4DIP is isoform-specific. Interacts with MAPRE1 and MAPRE3. Interacts (via C-terminus) with CAMSAP2; this interaction is much stronger in the presence of PDE4DIP. Interacts with CAMSAP3. Interacts (via C-terminus) with the gamma-tubulin ring complex (gamma-TuRC), composed of gamma-tubulin, TUBGCP2, TUBGCP3, TUBGCP4, TUBGCP5 and TUBGCP6. As to expression, highly expressed in gastric parietal cells.

The protein localises to the golgi apparatus. The protein resides in the cytoplasm. It localises to the cytoskeleton. Its subcellular location is the microtubule organizing center. It is found in the centrosome. Scaffolding protein that assembles several protein kinases and phosphatases on the centrosome and Golgi apparatus. Required to maintain the integrity of the Golgi apparatus. Required for microtubule nucleation at the cis-side of the Golgi apparatus. Required for association of the centrosomes with the poles of the bipolar mitotic spindle during metaphase. In complex with PDE4DIP, recruits CAMSAP2 to the Golgi apparatus and tethers non-centrosomal minus-end microtubules to the Golgi, an important step for polarized cell movement. In complex with PDE4DIP, EB1/MAPRE1 and CDK5RAP2, contributes to microtubules nucleation and extension also from the centrosome to the cell periphery. The interaction with PDE4DIP is isoform-specific. The sequence is that of A-kinase anchor protein 9 (AKAP9) from Oryctolagus cuniculus (Rabbit).